Consider the following 219-residue polypeptide: Chloramphenicol acetyltransferase (219 aa).

The Proton acceptor role is filled by His193.

The protein belongs to the chloramphenicol acetyltransferase family.

The catalysed reaction is chloramphenicol + acetyl-CoA = chloramphenicol 3-acetate + CoA. In terms of biological role, this enzyme is an effector of chloramphenicol resistance in bacteria. In Acinetobacter calcoaceticus subsp. anitratus, this protein is Chloramphenicol acetyltransferase (cat).